We begin with the raw amino-acid sequence, 577 residues long: Probable L-gulonolactone oxidase 4 (577 aa).

The N-terminal stretch at 1-17 (MSFWLSLIFCFFTFASS) is a signal peptide. The FAD-binding PCMH-type domain maps to 46–228 (SICKAAKVEY…SQVTFELQPM (183 aa)).

This sequence belongs to the oxygen-dependent FAD-linked oxidoreductase family. Requires FAD as cofactor.

It carries out the reaction L-gulono-1,4-lactone + O2 = L-ascorbate + H2O2 + H(+). It functions in the pathway cofactor biosynthesis; L-ascorbate biosynthesis. May be involved in the biosynthesis of ascorbic acid. This chain is Probable L-gulonolactone oxidase 4, found in Arabidopsis thaliana (Mouse-ear cress).